We begin with the raw amino-acid sequence, 242 residues long: Caffeoyl-CoA O-methyltransferase 2 (242 aa).

Lys-16 contributes to the substrate binding site. S-adenosyl-L-methionine-binding positions include Thr-58, Glu-80, 82-83 (GV), Ser-88, Asp-106, and Ala-135. Position 158 (Asp-158) interacts with substrate. Asp-158 is an a divalent metal cation binding site. Asp-160 is an S-adenosyl-L-methionine binding site. Positions 184 and 185 each coordinate a divalent metal cation. A substrate-binding site is contributed by Asn-189.

The protein belongs to the class I-like SAM-binding methyltransferase superfamily. Cation-dependent O-methyltransferase family. CCoAMT subfamily. Requires Mg(2+) as cofactor. In terms of tissue distribution, mostly expressed in the bottom and middle parts of the stems.

The enzyme catalyses (E)-caffeoyl-CoA + S-adenosyl-L-methionine = (E)-feruloyl-CoA + S-adenosyl-L-homocysteine + H(+). Its pathway is aromatic compound metabolism; phenylpropanoid biosynthesis. Methylates caffeoyl-CoA to feruloyl-CoA and 5-hydroxyferuloyl-CoA to sinapoyl-CoA. Plays a role in the synthesis of feruloylated polysaccharides. Involved in the reinforcement of the plant cell wall. Also involved in the responding to wounding or pathogen challenge by the increased formation of cell wall-bound ferulic acid polymers. Methylates 5-hydroxyferulolyl-CoA more efficiently than caffeoyl-CoA. This is Caffeoyl-CoA O-methyltransferase 2 (CCOAOMT2) from Nicotiana tabacum (Common tobacco).